A 332-amino-acid chain; its full sequence is Phosphate acyltransferase (332 aa).

It belongs to the PlsX family. As to quaternary structure, homodimer. Probably interacts with PlsY.

The protein localises to the cytoplasm. The catalysed reaction is a fatty acyl-[ACP] + phosphate = an acyl phosphate + holo-[ACP]. Its pathway is lipid metabolism; phospholipid metabolism. Its function is as follows. Catalyzes the reversible formation of acyl-phosphate (acyl-PO(4)) from acyl-[acyl-carrier-protein] (acyl-ACP). This enzyme utilizes acyl-ACP as fatty acyl donor, but not acyl-CoA. This Fusobacterium nucleatum subsp. nucleatum (strain ATCC 25586 / DSM 15643 / BCRC 10681 / CIP 101130 / JCM 8532 / KCTC 2640 / LMG 13131 / VPI 4355) protein is Phosphate acyltransferase.